A 587-amino-acid chain; its full sequence is Proteasome-associated ATPase (587 aa).

Residues 1-94 (MAARDDAEAR…KEEVDRLAQP (94 aa)) are a coiled coil. 276-281 (GCGKTL) serves as a coordination point for ATP. A docks into pockets in the proteasome alpha-ring region spans residues 586-587 (YL).

It belongs to the AAA ATPase family. As to quaternary structure, homohexamer. Assembles into a hexameric ring structure that caps the 20S proteasome core. Strongly interacts with the prokaryotic ubiquitin-like protein Pup through a hydrophobic interface; the interacting region of ARC lies in its N-terminal coiled-coil domain. There is one Pup binding site per ARC hexamer ring. Upon ATP-binding, the C-terminus of ARC interacts with the alpha-rings of the proteasome core, possibly by binding to the intersubunit pockets.

It participates in protein degradation; proteasomal Pup-dependent pathway. In terms of biological role, ATPase which is responsible for recognizing, binding, unfolding and translocation of pupylated proteins into the bacterial 20S proteasome core particle. May be essential for opening the gate of the 20S proteasome via an interaction with its C-terminus, thereby allowing substrate entry and access to the site of proteolysis. Thus, the C-termini of the proteasomal ATPase may function like a 'key in a lock' to induce gate opening and therefore regulate proteolysis. This Streptosporangium roseum (strain ATCC 12428 / DSM 43021 / JCM 3005 / KCTC 9067 / NCIMB 10171 / NRRL 2505 / NI 9100) protein is Proteasome-associated ATPase.